The following is a 160-amino-acid chain: Eosinophil cationic protein (160 aa).

The N-terminal stretch at 1-27 (MVPKLFTSQICLLLLLGLSGVGGSLHA) is a signal peptide. A required for nearly all of the bactericidal activities; partially involved in LPS-binding region spans residues 28–72 (KPRQFTRAQWFAIQHVSLNPPQCTTAMRVINNYQRRCKDQNTFLR). Histidine 42 acts as the Proton acceptor in catalysis. Disulfide bonds link cysteine 50-cysteine 110, cysteine 64-cysteine 123, cysteine 82-cysteine 138, and cysteine 89-cysteine 98. At tyrosine 60 the chain carries 3'-nitrotyrosine. A substrate-binding site is contributed by 65–69 (KDQNT). N-linked (GlcNAc...) asparagine glycosylation is found at asparagine 86, asparagine 92, asparagine 111, and asparagine 119. The active-site Proton donor is the histidine 155.

It belongs to the pancreatic ribonuclease family. As to quaternary structure, interacts with bacterial lipopolysaccharide (LPS) and lipoteichoic acid (LTA). In vitro interacts with phospholipid bilayers.

It localises to the secreted. In terms of biological role, cytotoxin and helminthotoxin with low-efficiency ribonuclease activity. Possesses a wide variety of biological activities. Exhibits antibacterial activity. The chain is Eosinophil cationic protein (RNASE3) from Pongo pygmaeus (Bornean orangutan).